The sequence spans 304 residues: HTH-type transcriptional regulator TtuA (304 aa).

The HTH lysR-type domain occupies 1 to 58 (MELEQLKCFVAAAEELHFGRAAQKMGILPASLGRHLRLLEESLGTRLMSRTTRSVALT). A DNA-binding region (H-T-H motif) is located at residues 18-37 (FGRAAQKMGILPASLGRHLR).

It belongs to the LysR transcriptional regulatory family.

Its function is as follows. Transcriptional regulator of the ttuABCDE tartrate utilization operon. The chain is HTH-type transcriptional regulator TtuA (ttuA) from Agrobacterium vitis (Rhizobium vitis).